A 520-amino-acid chain; its full sequence is tRNA (guanine-N(7)-)-methyltransferase non-catalytic subunit TRM82 (520 aa).

Residues 51–102 (PLDSEISPDRASSAGTCAEPPEKRRKLTPPVDESGEAQTEQSAKAKARKSQT) form a disordered region. WD repeat units follow at residues 105–145 (QAWS…KLTQ), 244–291 (GHVS…HIIH), and 296–338 (GHTS…QTIP).

This sequence belongs to the WD repeat TRM82 family. Forms a heterodimer with the catalytic subunit TRM8.

The protein localises to the nucleus. It functions in the pathway tRNA modification; N(7)-methylguanine-tRNA biosynthesis. Required for the formation of N(7)-methylguanine at position 46 (m7G46) in tRNA. In the complex, it is required to stabilize and induce conformational changes of the catalytic subunit. The polypeptide is tRNA (guanine-N(7)-)-methyltransferase non-catalytic subunit TRM82 (Coccidioides immitis (strain RS) (Valley fever fungus)).